Reading from the N-terminus, the 524-residue chain is Peptide chain release factor 3 (524 aa).

The tr-type G domain occupies 11-278 (AKRRTFAIIS…SFVQYAPEPG (268 aa)). Residues 20–27 (SHPDAGKT), 88–92 (DTPGH), and 142–145 (NKLD) each bind GTP.

Belongs to the TRAFAC class translation factor GTPase superfamily. Classic translation factor GTPase family. PrfC subfamily.

Its subcellular location is the cytoplasm. Increases the formation of ribosomal termination complexes and stimulates activities of RF-1 and RF-2. It binds guanine nucleotides and has strong preference for UGA stop codons. It may interact directly with the ribosome. The stimulation of RF-1 and RF-2 is significantly reduced by GTP and GDP, but not by GMP. This chain is Peptide chain release factor 3, found in Lacticaseibacillus casei (strain BL23) (Lactobacillus casei).